A 184-amino-acid chain; its full sequence is Photosystem I assembly protein Ycf4 (184 aa).

2 consecutive transmembrane segments (helical) span residues 22-42 (FCWA…GISS) and 64-84 (IVMS…WSTI).

This sequence belongs to the Ycf4 family.

Its subcellular location is the plastid. It localises to the chloroplast thylakoid membrane. Seems to be required for the assembly of the photosystem I complex. This chain is Photosystem I assembly protein Ycf4, found in Piper cenocladum (Ant piper).